An 856-amino-acid polypeptide reads, in one-letter code: Paladin (856 aa).

Positions 1–16 (MGTTASTAQQTVSAGT) are enriched in low complexity. The interval 1 to 29 (MGTTASTAQQTVSAGTPFEGLQGSGTMDS) is disordered. Glycine 2 carries N-myristoyl glycine lipidation. Phosphoserine is present on serine 86.

Belongs to the paladin family. As to expression, expressed in endothelial cells, and in certain larger vessels, in mural cells. In the brain, possibly expressed in microglia. Expressed in peripheral blood mononuclear cells (at protein level).

It localises to the cytoplasm. It is found in the cytosol. This Homo sapiens (Human) protein is Paladin (PALD1).